The sequence spans 183 residues: A-type ATP synthase subunit E (183 aa).

It belongs to the V-ATPase E subunit family. In terms of assembly, has multiple subunits with at least A(3), B(3), C, D, E, F, H, I and proteolipid K(x).

The protein resides in the cell membrane. Its function is as follows. Component of the A-type ATP synthase that produces ATP from ADP in the presence of a proton gradient across the membrane. This Methanococcoides burtonii (strain DSM 6242 / NBRC 107633 / OCM 468 / ACE-M) protein is A-type ATP synthase subunit E.